The chain runs to 68 residues: Non-specific lipid-transfer protein 2 (68 aa).

This sequence belongs to the plant LTP family.

In terms of biological role, plant non-specific lipid-transfer proteins transfer phospholipids as well as galactolipids across membranes. May play a role in wax or cutin deposition in the cell walls of expanding epidermal cells and certain secretory tissues. The chain is Non-specific lipid-transfer protein 2 from Prunus armeniaca (Apricot).